Consider the following 300-residue polypeptide: Phosphatidylglycerol--prolipoprotein diacylglyceryl transferase (300 aa).

7 helical membrane passes run L17–G37, M59–Y79, V94–L114, F129–G149, S204–A224, M230–F250, and L265–W285. R142 contributes to the a 1,2-diacyl-sn-glycero-3-phospho-(1'-sn-glycerol) binding site.

It belongs to the Lgt family.

It localises to the cell inner membrane. It catalyses the reaction L-cysteinyl-[prolipoprotein] + a 1,2-diacyl-sn-glycero-3-phospho-(1'-sn-glycerol) = an S-1,2-diacyl-sn-glyceryl-L-cysteinyl-[prolipoprotein] + sn-glycerol 1-phosphate + H(+). The protein operates within protein modification; lipoprotein biosynthesis (diacylglyceryl transfer). Catalyzes the transfer of the diacylglyceryl group from phosphatidylglycerol to the sulfhydryl group of the N-terminal cysteine of a prolipoprotein, the first step in the formation of mature lipoproteins. This chain is Phosphatidylglycerol--prolipoprotein diacylglyceryl transferase, found in Ralstonia pickettii (strain 12J).